The primary structure comprises 178 residues: Interleukin-10 (178 aa).

The signal sequence occupies residues 1-18; the sequence is MHSSALLCCLVLLTGVRA. 2 disulfides stabilise this stretch: Cys-30-Cys-126 and Cys-80-Cys-132. An N-linked (GlcNAc...) asparagine glycan is attached at Asn-134.

It belongs to the IL-10 family. In terms of assembly, homodimer. Interacts with IL10RA and IL10RB.

It localises to the secreted. Its function is as follows. Major immune regulatory cytokine that acts on many cells of the immune system where it has profound anti-inflammatory functions, limiting excessive tissue disruption caused by inflammation. Mechanistically, IL10 binds to its heterotetrameric receptor comprising IL10RA and IL10RB leading to JAK1 and STAT2-mediated phosphorylation of STAT3. In turn, STAT3 translocates to the nucleus where it drives expression of anti-inflammatory mediators. Targets antigen-presenting cells (APCs) such as macrophages and monocytes and inhibits their release of pro-inflammatory cytokines including granulocyte-macrophage colony-stimulating factor /GM-CSF, granulocyte colony-stimulating factor/G-CSF, IL-1 alpha, IL-1 beta, IL-6, IL-8 and TNF-alpha. Also interferes with antigen presentation by reducing the expression of MHC-class II and co-stimulatory molecules, thereby inhibiting their ability to induce T cell activation. In addition, controls the inflammatory response of macrophages by reprogramming essential metabolic pathways including mTOR signaling. The sequence is that of Interleukin-10 (IL10) from Cercocebus atys (Sooty mangabey).